A 90-amino-acid polypeptide reads, in one-letter code: Probable Fe(2+)-trafficking protein (90 aa).

Belongs to the Fe(2+)-trafficking protein family.

In terms of biological role, could be a mediator in iron transactions between iron acquisition and iron-requiring processes, such as synthesis and/or repair of Fe-S clusters in biosynthetic enzymes. This chain is Probable Fe(2+)-trafficking protein, found in Acinetobacter baylyi (strain ATCC 33305 / BD413 / ADP1).